Reading from the N-terminus, the 179-residue chain is Large ribosomal subunit protein uL5 (179 aa).

This sequence belongs to the universal ribosomal protein uL5 family. In terms of assembly, part of the 50S ribosomal subunit; part of the 5S rRNA/L5/L18/L25 subcomplex. Contacts the 5S rRNA and the P site tRNA. Forms a bridge to the 30S subunit in the 70S ribosome.

Functionally, this is one of the proteins that bind and probably mediate the attachment of the 5S RNA into the large ribosomal subunit, where it forms part of the central protuberance. In the 70S ribosome it contacts protein S13 of the 30S subunit (bridge B1b), connecting the 2 subunits; this bridge is implicated in subunit movement. Contacts the P site tRNA; the 5S rRNA and some of its associated proteins might help stabilize positioning of ribosome-bound tRNAs. This Maridesulfovibrio salexigens (strain ATCC 14822 / DSM 2638 / NCIMB 8403 / VKM B-1763) (Desulfovibrio salexigens) protein is Large ribosomal subunit protein uL5.